A 294-amino-acid chain; its full sequence is Histone deacetylase HDT3 (294 aa).

N-acetylmethionine is present on Met-1. The tract at residues 2–5 (EFWG) is required to repress transcription. The disordered stretch occupies residues 124–269 (QVNFQLPNED…TPKSAGAFGC (146 aa)). The segment covering 140–188 (DDADGSEEDSSDDDDSENSGDEEEEKVTAESDSEEDDSSDDEEDDSSEE) has biased composition (acidic residues). A compositionally biased stretch (basic and acidic residues) spans 189–202 (ETPKKPEEPKKRSA). Residues 203–213 (EPNSSKNPASN) show a composition bias toward low complexity. A compositionally biased stretch (polar residues) spans 252-262 (GETSKQQQTPK). Residues 267–290 (FGCKSCTRTFTSEMGLQSHTKAKH) form a C2H2-type zinc finger.

It belongs to the histone deacetylase HD2 family. Interacts with DNMT2. As to expression, expressed in leaves, roots, stems, young plantlets, flowers and siliques. Highest levels in ovules, embryos, shoot apical meristems and first leaves. Also expressed in somatic embryos.

The protein resides in the nucleus. The protein localises to the nucleolus. Functionally, probably mediates the deacetylation of lysine residues on the N-terminal part of the core histones (H2A, H2B, H3 and H4). Histone deacetylation gives a tag for epigenetic repression and plays an important role in transcriptional regulation, cell cycle progression and developmental events. Involved in the modulation of abscisic acid and stress-responsive genes. The chain is Histone deacetylase HDT3 (HDT3) from Arabidopsis thaliana (Mouse-ear cress).